Reading from the N-terminus, the 140-residue chain is 3-hydroxyacyl-[acyl-carrier-protein] dehydratase FabZ (140 aa).

Residue histidine 48 is part of the active site.

The protein belongs to the thioester dehydratase family. FabZ subfamily.

Its subcellular location is the cytoplasm. It carries out the reaction a (3R)-hydroxyacyl-[ACP] = a (2E)-enoyl-[ACP] + H2O. Its function is as follows. Involved in unsaturated fatty acids biosynthesis. Catalyzes the dehydration of short chain beta-hydroxyacyl-ACPs and long chain saturated and unsaturated beta-hydroxyacyl-ACPs. The chain is 3-hydroxyacyl-[acyl-carrier-protein] dehydratase FabZ from Halalkalibacterium halodurans (strain ATCC BAA-125 / DSM 18197 / FERM 7344 / JCM 9153 / C-125) (Bacillus halodurans).